Reading from the N-terminus, the 475-residue chain is Putative aldehyde dehydrogenase SSP0762 (475 aa).

201–207 is an NAD(+) binding site; sequence GDGQGVG. Residues Glu245 and Cys279 contribute to the active site.

It belongs to the aldehyde dehydrogenase family.

The enzyme catalyses an aldehyde + NAD(+) + H2O = a carboxylate + NADH + 2 H(+). The protein is Putative aldehyde dehydrogenase SSP0762 of Staphylococcus saprophyticus subsp. saprophyticus (strain ATCC 15305 / DSM 20229 / NCIMB 8711 / NCTC 7292 / S-41).